The chain runs to 173 residues: Alpha-crystallin A chain (173 aa).

Position 1 is an N-acetylmethionine (M1). Positions 1–63 are required for complex formation with BFSP1 and BFSP2; that stretch reads MDIAIQHPWF…RTVLDSGISE (63 aa). Q6 is modified (deamidated glutamine; partial). S45 bears the Phosphoserine mark. Q50 carries the post-translational modification Deamidated glutamine; partial. Positions 52-162 constitute a sHSP domain; sequence LFRTVLDSGI…GHSERAIPVS (111 aa). K70 carries the post-translational modification N6-acetyllysine. Residue Q90 is modified to Deamidated glutamine; partial. Residue K99 is modified to N6-acetyllysine. H100 lines the Zn(2+) pocket. Deamidated asparagine; partial is present on N101. Residues E102 and H107 each coordinate Zn(2+). Position 122 is a phosphoserine (S122). N123 bears the Deamidated asparagine; partial mark. The interval 144–173 is disordered; it reads PKVPSGVDAGHSERAIPVSREEKPSSAPSS. Basic and acidic residues predominate over residues 153-167; that stretch reads GHSERAIPVSREEKP. H154 lines the Zn(2+) pocket. An O-linked (GlcNAc) serine glycan is attached at S162.

This sequence belongs to the small heat shock protein (HSP20) family. In terms of assembly, heteromer composed of three CRYAA and one CRYAB subunits. Inter-subunit bridging via zinc ions enhances stability, which is crucial as there is no protein turn over in the lens. Can also form homodimers and homotetramers (dimers of dimers) which serve as the building blocks of homooligomers. Within homooligomers, the zinc-binding motif is created from residues of 3 different molecules. His-100 and Glu-102 from one molecule are ligands of the zinc ion, and His-107 and His-154 residues from additional molecules complete the site with tetrahedral coordination geometry. Part of a complex required for lens intermediate filament formation composed of BFSP1, BFSP2 and CRYAA. Post-translationally, acetylation at Lys-70 may increase chaperone activity. Undergoes age-dependent proteolytical cleavage at the C-terminus.

The protein resides in the cytoplasm. The protein localises to the nucleus. Its function is as follows. Contributes to the transparency and refractive index of the lens. Acts as a chaperone, preventing aggregation of various proteins under a wide range of stress conditions. Required for the correct formation of lens intermediate filaments as part of a complex composed of BFSP1, BFSP2 and CRYAA. The protein is Alpha-crystallin A chain (CRYAA) of Pteropus poliocephalus (Grey-headed flying fox).